A 724-amino-acid polypeptide reads, in one-letter code: Disks large homolog 4 (724 aa).

S-palmitoyl cysteine attachment occurs at residues C3 and C5. The segment at 15 to 35 (QDEDTPPLEHSPAHLPNQANS) is disordered. PDZ domains lie at 65–151 (EITL…VMRR) and 160–246 (EIKL…VAKP). Phosphoserine occurs at positions 73 and 142. Y240 is modified (phosphotyrosine). Residue S295 is modified to Phosphoserine. Residues 313-393 (RIVIHRGSTG…QTVTIIAQYK (81 aa)) enclose the PDZ 3 domain. Residues S415 and S418 each carry the phosphoserine modification. A Phosphothreonine modification is found at T420. Phosphoserine is present on residues S422, S425, S449, and S480. The SH3 domain occupies 428–498 (KRGFYIRALF…PSKRRVERRE (71 aa)). The Guanylate kinase-like domain maps to 534–709 (ARPIIILGPT…IYHKVKRVIE (176 aa)). Y580 is modified (phosphotyrosine). 2 positions are modified to phosphoserine: S606 and S654. The residue at position 715 (Y715) is a Phosphotyrosine.

Belongs to the MAGUK family. In terms of assembly, interacts through its PDZ domains with ANO2 and NETO1. Interacts with KCNJ4. Interacts through its first two PDZ domains with GRIN2A, GRIN2B, GRIN2C and GRIN2D. Interacts with ERBB4. Interacts with KCNA1, KCNA2, KCNA3 and KCNA4. Interacts with LRRC4 and LRRC4B. Interacts with SYNGAP1. Interacts with ASIC3. Interacts with SEMA4C. Interacts with CXADR. Interacts with KCND2. Interacts (via first PDZ domain) with CRIPT. Interacts through its first PDZ domain with GRIK2 and KCNA4. Interacts through its second PDZ domain with the PDZ domain of NOS1 or the C-terminus of CAPON. Interacts through its third PDZ domain with NLGN1 and CRIPT, and probably with NLGN2 and NLGN3. Interacts through its guanylate kinase-like domain with DLGAP1/GKAP, DLGAP2, DLGAP3, DLGAP4, MAP1A, BEGAIN and SIPA1L1. Interacts through its guanylate kinase-like domain with KIF13B. Isoform 2 interacts through an L27 domain with HGS/HRS and the first L27 domain of CASK. Interacts with ANKS1B. Interacts with ADR1B. May interact with HTR2A. Interacts with ADAM22, KLHL17 and LGI1. Interacts with FRMPD4 (via C-terminus). Interacts with LRFN1 and LRFN2. Interacts with LRFN4. Interacts (via N-terminal tandem pair of PDZ domains) with GPER1 (via C-terminus tail motif); the interaction is direct and induces the increase of GPER1 protein levels residing at the plasma membrane surface in a estradiol-independent manner. Interacts (via N-terminus tandem pair of PDZ domains) with NOS1 (via N-terminal domain). Interacts with SHANK3. Interacts with GPR85. Interacts with CACNG2 and MPP2 (via the SH3-Guanylate kinase-like sub-module). Interacts with ADGRB1. Found in a complex with PRR7 and GRIN1. Interacts (via PDZ3 domain and to lesser degree via PDZ2 domain) with PRR7. Component of the postsynaptic hippocampal AMPA-type glutamate receptor (AMPAR) complex, at least composed of pore forming AMPAR subunits GRIA1, GRIA2 and GRIA3 and AMPAR auxiliary proteins SHISA6 and SHISA7. Interacts (via its first two PDZ domains) with SHISA6 and SHISA7 (via PDZ-binding motif); the interaction is direct. Interacts (via PDZ domain 2) with SEMA4F (via PDZ-binding motif); this interaction may promote translocation of DLG4/SAP90 to the membrane. Interacts with RPH3A and GRIN2A; this ternary complex regulates NMDA receptor composition at postsynaptic membranes. Interacts with ABR and BCR. Interacts with DGKI (via PDZ-binding motif); controls the localization of DGKI to the synapse. Interacts with C9orf72, SMCR8 and RAB39B. Interacts with ZDHHC5. Interacts with PTEN (via PDZ domain-binding motif); the interaction is induced by NMDA and is required for PTEN location at postsynaptic density. Found in a complex with GRIA1, GRIA2, GRIA3, GRIA4, CACNG8 and CNIH2. Interacts with FAM81A; the interaction facilitates condensate formation via liquid-liquid phase separation. Interacts with ADGRL3. Interacts with SORCS3. In terms of processing, palmitoylated. Palmitoylation is required for targeting to postsynaptic density, plasma membrane and synapses. Palmitoylation by ZDHHC2 occurs when the synaptic activity decreases and induces DLG4 synaptic clustering. Palmitoylation by ZDHHC15 regulates trafficking to the postsynaptic density and function in synaptogenesis. Palmitoylation may play a role in glutamate receptor GRIA1 synapse clustering. Depalmitoylated by ABHD17A and ABHD17B and to a lesser extent by ABHD17C, ABHD12, ABHD13, LYPLA1 and LYPLA2. Undergoes rapid synaptic palmitoylation/depalmitoylation cycle during neuronal development which slows down in mature neurons. Ubiquitinated by MDM2 in response to NMDA receptor activation, leading to proteasome-mediated degradation of DLG4 which is required for AMPA receptor endocytosis. In terms of tissue distribution, expressed in brain (at protein level). Detected in juxtaparanodal zones in the central nervous system and at nerve terminal plexuses of basket cells in the cerebellum. Expressed in cerebrum. Expressed in hippocampal neurons (at protein level). Isoform 1 and isoform 2: highly expressed in cerebellum, cortex, hippocampus, and corpus striatum.

The protein localises to the cell membrane. The protein resides in the postsynaptic density. It is found in the synapse. It localises to the cytoplasm. Its subcellular location is the cell projection. The protein localises to the axon. The protein resides in the dendritic spine. It is found in the dendrite. It localises to the presynapse. In terms of biological role, postsynaptic scaffolding protein that plays a critical role in synaptogenesis and synaptic plasticity by providing a platform for the postsynaptic clustering of crucial synaptic proteins. Interacts with the cytoplasmic tail of NMDA receptor subunits and shaker-type potassium channels. Required for synaptic plasticity associated with NMDA receptor signaling. Overexpression or depletion of DLG4 changes the ratio of excitatory to inhibitory synapses in hippocampal neurons. May reduce the amplitude of ASIC3 acid-evoked currents by retaining the channel intracellularly. May regulate the intracellular trafficking of ADR1B. Also regulates AMPA-type glutamate receptor (AMPAR) immobilization at postsynaptic density keeping the channels in an activated state in the presence of glutamate and preventing synaptic depression. Under basal conditions, cooperates with FYN to stabilize palmitoyltransferase ZDHHC5 at the synaptic membrane through FYN-mediated phosphorylation of ZDHHC5 and its subsequent inhibition of association with endocytic proteins. In Rattus norvegicus (Rat), this protein is Disks large homolog 4.